Consider the following 186-residue polypeptide: Glycerol-3-phosphate acyltransferase 1 (186 aa).

A run of 5 helical transmembrane segments spans residues 9–29, 58–78, 85–105, 121–141, and 161–181; these read MQFLYLVASYLFGNILTAYIV, GYFVATFLGDAIKGAIVVSIA, STFVMLTLLAVIIGHIYPVLF, IAFDYLIALTLVAVFIIFYLI, and ILYSYSIVTTILSALIIVLIL.

It belongs to the PlsY family. In terms of assembly, probably interacts with PlsX.

The protein resides in the cell membrane. It carries out the reaction an acyl phosphate + sn-glycerol 3-phosphate = a 1-acyl-sn-glycero-3-phosphate + phosphate. Its pathway is lipid metabolism; phospholipid metabolism. In terms of biological role, catalyzes the transfer of an acyl group from acyl-phosphate (acyl-PO(4)) to glycerol-3-phosphate (G3P) to form lysophosphatidic acid (LPA). This enzyme utilizes acyl-phosphate as fatty acyl donor, but not acyl-CoA or acyl-ACP. This is Glycerol-3-phosphate acyltransferase 1 from Bacillus cereus (strain ZK / E33L).